The sequence spans 226 residues: Deoxyribose-phosphate aldolase (226 aa).

Aspartate 95 (proton donor/acceptor) is an active-site residue. Lysine 157 functions as the Schiff-base intermediate with acetaldehyde in the catalytic mechanism. Catalysis depends on lysine 186, which acts as the Proton donor/acceptor.

Belongs to the DeoC/FbaB aldolase family. DeoC type 1 subfamily.

It localises to the cytoplasm. The enzyme catalyses 2-deoxy-D-ribose 5-phosphate = D-glyceraldehyde 3-phosphate + acetaldehyde. It functions in the pathway carbohydrate degradation; 2-deoxy-D-ribose 1-phosphate degradation; D-glyceraldehyde 3-phosphate and acetaldehyde from 2-deoxy-alpha-D-ribose 1-phosphate: step 2/2. With respect to regulation, partially inhibited by acetaldehyde. After incubation for 2, 4 and 6 hours in 300 mM acetaldehyde at 25 degrees Celsius, retains approximately 61.32%, 42.33% and 34.73% of the initial 2-deoxy-D-ribose-5-phosphate (DR5P) cleavage activity, respectively. Functionally, catalyzes a reversible aldol reaction between acetaldehyde and D-glyceraldehyde 3-phosphate to generate 2-deoxy-D-ribose 5-phosphate. Its function is as follows. In vitro, DERA can catalyze the aldol condensation of chloroacetaldehyde (CHAD) and acetaldehyde (ACD), yielding (S)-4-chloro-3-hydroxybutanal ((S)-CHB), which can combine with another aldehyde to form (3R,5S)-6-chloro-2,4,6-trideoxyhexapyranose (CTeHP), a key intermediate for statin drugs. The protein is Deoxyribose-phosphate aldolase of Pseudomonas syringae pv. syringae (strain B728a).